Consider the following 365-residue polypeptide: Galactoside alpha-(1,2)-fucosyltransferase 1 (365 aa).

Residues 1-8 (MWPLSHRH) lie on the Cytoplasmic side of the membrane. The chain crosses the membrane as a helical; Signal-anchor for type II membrane protein span at residues 9-25 (LCLAFLLVCVLSAISFF). Residues 26–365 (LHLYQDSIRH…LSPLWTLAEP (340 aa)) are Lumenal-facing. 3 N-linked (GlcNAc...) asparagine glycosylation sites follow: asparagine 65, asparagine 301, and asparagine 327.

The protein belongs to the glycosyltransferase 11 family.

The protein resides in the golgi apparatus. It is found in the golgi stack membrane. The enzyme catalyses a beta-D-galactosyl-(1-&gt;4)-N-acetyl-beta-D-glucosaminyl derivative + GDP-beta-L-fucose = an alpha-L-Fuc-(1-&gt;2)-beta-D-Gal-(1-&gt;4)-beta-D-GlcNAc derivative + GDP + H(+). The catalysed reaction is a ganglioside GA1 + GDP-beta-L-fucose = a ganglioside Fuc-GA1 + GDP + H(+). It carries out the reaction a beta-D-Gal-(1-&gt;3)-beta-D-GlcNAc-(1-&gt;3)-beta-D-Gal-(1-&gt;4)-beta-D-Glc-(1&lt;-&gt;1')-Cer(d18:1(4E)) + GDP-beta-L-fucose = alpha-L-fucosyl-(1-&gt;2)- beta-D-galactosyl-(1-&gt;3)-N-acetyl-beta-D-glucosaminyl-(1-&gt;3)-beta-D-galactosyl-(1-&gt;4)-beta-D-glucosyl-(1&lt;-&gt;1')-N-acylsphing-4-enine + GDP + H(+). It catalyses the reaction a neolactoside nLc4Cer(d18:1(4E)) + GDP-beta-L-fucose = a neolactoside IV(2)-alpha-Fuc-nLc4Cer(d18:1(4E)) + GDP + H(+). The enzyme catalyses a ganglioside GM1 + GDP-beta-L-fucose = a ganglioside Fuc-GM1 + GDP + H(+). The catalysed reaction is beta-D-galactosyl-(1-&gt;3)-N-acetyl-D-galactosamine + GDP-beta-L-fucose = alpha-L-fucosyl-(1-&gt;2)-beta-D-galactosyl-(1-&gt;3)-N-acetyl-D-galactosamine + GDP + H(+). It functions in the pathway protein modification; protein glycosylation. Catalyzes the transfer of L-fucose, from a guanosine diphosphate-beta-L-fucose, to the terminal galactose residue of glycoconjugates through an alpha(1,2) linkage leading to H antigen synthesis that is an intermediate substrate in the synthesis of ABO blood group antigens. H antigen is essential for maturation of the glomerular layer of the main olfactory bulb, in cell migration and early cell-cell contacts during tumor associated angiogenesis. Preferentially fucosylates soluble lactose and to a lesser extent fucosylates glycolipids gangliosides GA1 and GM1a. The chain is Galactoside alpha-(1,2)-fucosyltransferase 1 from Leontopithecus chrysomelas (Golden-headed lion tamarin).